Reading from the N-terminus, the 482-residue chain is Matrix metalloproteinase-20 (482 aa).

Positions 1–21 (MKVLPASGLAVLVTALKFATA) are cleaved as a signal peptide. Positions 22 to 106 (DPNLLAATPR…PRCGVPDVAN (85 aa)) are excised as a propeptide. Positions 97-104 (PRCGVPDV) match the Cysteine switch motif. Cys99 is a Zn(2+) binding site. The Ca(2+) site is built by Glu163, Ala164, and Asp165. His175 and Asp177 together coordinate Zn(2+). The Ca(2+) site is built by Asp182, Gly183, Arg185, and Thr187. A Zn(2+)-binding site is contributed by His190. Ca(2+) is bound by residues Glu196, Gly197, Gly199, and Asp201. Residue His203 coordinates Zn(2+). Residues Asp205 and Glu208 each contribute to the Ca(2+) site. A Zn(2+)-binding site is contributed by His225. Glu226 is an active-site residue. Zn(2+) contacts are provided by His229 and His235. Hemopexin repeat units follow at residues 292 to 342 (PDLC…FPQL), 343 to 388 (MSNV…GFPR), 390 to 438 (VQRI…FSGV), and 439 to 482 (SGHI…WIGC). Cys295 and Cys482 are disulfide-bonded.

This sequence belongs to the peptidase M10A family. It depends on Zn(2+) as a cofactor. Ca(2+) serves as cofactor. Autoactivates at least at the 106-Asn-|-Tyr-107 site. As to expression, expressed in the enamel organ.

The protein resides in the secreted. It is found in the extracellular space. Its subcellular location is the extracellular matrix. Its function is as follows. Degrades amelogenin, the major protein component of the enamel matrix and two of the macromolecules characterizing the cartilage extracellular matrix: aggrecan and the cartilage oligomeric matrix protein (COMP). May play a central role in tooth enamel formation. Cleaves aggrecan at the '360-Asn-|-Phe-361' site. The protein is Matrix metalloproteinase-20 (Mmp20) of Mus musculus (Mouse).